The sequence spans 453 residues: Major fimbrium subunit FimC (453 aa).

The signal sequence occupies residues 1-28 (MKMKYFHHPSGLLPRLLLLLLLTMGAVA). Cys29 carries the N-palmitoyl cysteine lipid modification. Cys29 is lipidated: S-diacylglycerol cysteine. The propeptide occupies 29 to 56 (CTKEDNPDQPTSDEVATVKMSLDDVEMR).

Belongs to the bacteroidetes fimbrillin superfamily. FimA/Mfa1 family. Fimbriae are composed of a major, structural subunit and the minor components FimC, FimD and FimE. Identified in a complex composed of FimC, FimD and FimE (in vitro). The complex interacts with host extracellular matrix proteins, including fibronectin and type I collagen. Interacts with host CXCR4.

Its subcellular location is the fimbrium. It is found in the cell outer membrane. Minor component of fimbriae. These long, filamentous pili are attached to the cell surface; they mediate biofilm formation, adhesion onto host cells and onto other bacteria that are part of the oral microbiome. They play an important role in invasion of periodontal tissues and are major virulence factors. FimC, FimD and FimE contribute to interaction with host CXCR4 and thereby down-regulate the TLR2-mediated host immune response. The sequence is that of Major fimbrium subunit FimC from Porphyromonas gingivalis (strain ATCC 33277 / DSM 20709 / CIP 103683 / JCM 12257 / NCTC 11834 / 2561).